Reading from the N-terminus, the 333-residue chain is MDERLLSGESAYEDADLEYSLRPQTLRQYIGQDKAKHNLEVFIEAAKMREETLDHVLLYGPPGLGKTTLANIIANEMGVNVRTTSGPAIERPGDLAAVLTALQPGDVLFIDEIHRLHRSIEEVLYPAMEDFCLDIVIGKGPSARSVRLDLPPFTLVGATTRAGALSAPLRDRFGVLSRLEYYTVDQLSAIVERTAEVFEVEIDSLAALEIARRARGTPRIANRLLRRVRDFAQVRGNGTVTMEITQMALELLQVDKLGLDHIDHKLLLGIIEKFRGGPVGLETVSATIGEESHTIEDVYEPYLLQIGFLQRTPRGRIVTPLAYEHFGMEIPKV.

The segment at 1-182 (MDERLLSGES…FGVLSRLEYY (182 aa)) is large ATPase domain (RuvB-L). Residues leucine 21, arginine 22, glycine 63, lysine 66, threonine 67, threonine 68, 129–131 (EDF), arginine 172, tyrosine 182, and arginine 219 contribute to the ATP site. Position 67 (threonine 67) interacts with Mg(2+). A small ATPAse domain (RuvB-S) region spans residues 183-253 (TVDQLSAIVE…ITQMALELLQ (71 aa)). A head domain (RuvB-H) region spans residues 256-333 (KLGLDHIDHK…EHFGMEIPKV (78 aa)). Residues arginine 311 and arginine 316 each coordinate DNA.

The protein belongs to the RuvB family. As to quaternary structure, homohexamer. Forms an RuvA(8)-RuvB(12)-Holliday junction (HJ) complex. HJ DNA is sandwiched between 2 RuvA tetramers; dsDNA enters through RuvA and exits via RuvB. An RuvB hexamer assembles on each DNA strand where it exits the tetramer. Each RuvB hexamer is contacted by two RuvA subunits (via domain III) on 2 adjacent RuvB subunits; this complex drives branch migration. In the full resolvosome a probable DNA-RuvA(4)-RuvB(12)-RuvC(2) complex forms which resolves the HJ.

Its subcellular location is the cytoplasm. It catalyses the reaction ATP + H2O = ADP + phosphate + H(+). Its function is as follows. The RuvA-RuvB-RuvC complex processes Holliday junction (HJ) DNA during genetic recombination and DNA repair, while the RuvA-RuvB complex plays an important role in the rescue of blocked DNA replication forks via replication fork reversal (RFR). RuvA specifically binds to HJ cruciform DNA, conferring on it an open structure. The RuvB hexamer acts as an ATP-dependent pump, pulling dsDNA into and through the RuvAB complex. RuvB forms 2 homohexamers on either side of HJ DNA bound by 1 or 2 RuvA tetramers; 4 subunits per hexamer contact DNA at a time. Coordinated motions by a converter formed by DNA-disengaged RuvB subunits stimulates ATP hydrolysis and nucleotide exchange. Immobilization of the converter enables RuvB to convert the ATP-contained energy into a lever motion, pulling 2 nucleotides of DNA out of the RuvA tetramer per ATP hydrolyzed, thus driving DNA branch migration. The RuvB motors rotate together with the DNA substrate, which together with the progressing nucleotide cycle form the mechanistic basis for DNA recombination by continuous HJ branch migration. Branch migration allows RuvC to scan DNA until it finds its consensus sequence, where it cleaves and resolves cruciform DNA. In Bacillus cereus (strain B4264), this protein is Holliday junction branch migration complex subunit RuvB.